We begin with the raw amino-acid sequence, 374 residues long: MSSNTDPNGMKVVVGMSGGVDSSVTALLLKQQGFDVTGLFMKNWEDDDDDEYCSTRQDLVDVASVCDVIGIDLEVVNFSAEYKDRVFADFLREYEAGRTPNPDVLCNSEIKFRCFLDHAMALGADRIATGHYAQVREWANDGRSEYQLLKAEDGTKDQSYFLYRLNQAQLAKTLFPLGALYKRDVRRIAAEAGLHVAEKKDSTGICFIGERPFREFLMRYLPMRPGEIRNLDDGRVIGEHQGLMYHTIGQRKGLHIGGIKGRQDGAGEHDAWYVAGKDVKANVLYAVQGHEHPALLKTRLSATDLHWIAGRDPHTHWVYTAKPRYRTPDMPCEIEALVDGGAEIVFAEPQWALTPGQSVVVYESKVCLGGGVIA.

Residues 15–22 (GMSGGVDS) and Met-41 contribute to the ATP site. An interaction with target base in tRNA region spans residues 101-103 (NPD). Cys-106 acts as the Nucleophile in catalysis. Cys-106 and Cys-206 are disulfide-bonded. Residue Gly-130 coordinates ATP. Positions 156 to 158 (KDQ) are interaction with tRNA. Cys-206 serves as the catalytic Cysteine persulfide intermediate. The tract at residues 324-325 (RY) is interaction with tRNA.

The protein belongs to the MnmA/TRMU family.

The protein resides in the cytoplasm. The enzyme catalyses S-sulfanyl-L-cysteinyl-[protein] + uridine(34) in tRNA + AH2 + ATP = 2-thiouridine(34) in tRNA + L-cysteinyl-[protein] + A + AMP + diphosphate + H(+). Catalyzes the 2-thiolation of uridine at the wobble position (U34) of tRNA, leading to the formation of s(2)U34. The polypeptide is tRNA-specific 2-thiouridylase MnmA (Aromatoleum aromaticum (strain DSM 19018 / LMG 30748 / EbN1) (Azoarcus sp. (strain EbN1))).